The following is a 328-amino-acid chain: Cell cycle control protein 50A (328 aa).

A disordered region spans residues 1–28 (MAMNYSAKDEVDGGPTGPPGGAAKTRRP). Ala-2 is subject to N-acetylalanine. The segment at 2–48 (AMNYSAKDEVDGGPTGPPGGAAKTRRPDNTAFKQQRLPAWQPILTAG) is required for ATPase and aminophospholipid flippase activity. At 2–49 (AMNYSAKDEVDGGPTGPPGGAAKTRRPDNTAFKQQRLPAWQPILTAGT) the chain is on the cytoplasmic side. Positions 49 to 315 (TVLPTFFIIG…LGVVLLVINH (267 aa)) are interaction with ATP8A2. Residues 50 to 70 (VLPTFFIIGLIFIPIGIGIFV) traverse the membrane as a helical segment. The Exoplasmic loop portion of the chain corresponds to 71-292 (TSNNIREIEG…SWMGGKNPFL (222 aa)). The disordered stretch occupies residues 102 to 125 (RDDSQLNGDPSALLNPSKECEPYR). Cysteines 121 and 135 form a disulfide. N-linked (GlcNAc...) asparagine glycosylation is found at Asn-144 and Asn-261. The chain crosses the membrane as a helical span at residues 293 to 313 (GIAYITIGSISFLLGVVLLVI). The Cytoplasmic portion of the chain corresponds to 314–328 (NHKYRNSSNTADITI).

The protein belongs to the CDC50/LEM3 family. In terms of assembly, component of various P4-ATPase flippase complexes which consists of a catalytic alpha subunit and an accessory beta subunit. Interacts with ATP8A1 to form a flippase complex; this complex forms an intermediate phosphoenzyme. Interacts with ATP8A2 to form a flippase complex. TP8B1:TMEM30A and ATP8B2:TMEM30A flippase complexes have been shown to form intermediate phosphoenzymes in vitro. Interacts with alpha subunits ATP8A1, ATP8B1, ATP8B2, ATP8B4, ATP10A, ATP10B, ATP10D, ATP11A, ATP11B and ATP11C. Post-translationally, N-glycosylated. Contains high mannose-type oligosaccharides.

It localises to the membrane. The protein resides in the golgi apparatus. Its subcellular location is the cytoplasmic vesicle. It is found in the secretory vesicle membrane. The protein localises to the apical cell membrane. It localises to the photoreceptor inner segment. The protein resides in the cell projection. Its subcellular location is the cilium. It is found in the photoreceptor outer segment. Its function is as follows. Accessory component of a P4-ATPase flippase complex which catalyzes the hydrolysis of ATP coupled to the transport of aminophospholipids from the outer to the inner leaflet of various membranes and ensures the maintenance of asymmetric distribution of phospholipids. Phospholipid translocation also seems to be implicated in vesicle formation and in uptake of lipid signaling molecules. The beta subunit may assist in binding of the phospholipid substrate. Required for the proper folding, assembly and ER to Golgi exit of the ATP8A2:TMEM30A flippase complex. ATP8A2:TMEM30A may be involved in regulation of neurite outgrowth, and, reconstituted to liposomes, predomiminantly transports phosphatidylserine (PS) and to a lesser extent phosphatidylethanolamine (PE). The ATP8A1:TMEM30A flippase complex seems to play a role in regulation of cell migration probably involving flippase-mediated translocation of phosphatidylethanolamine (PE) at the plasma membrane. Required for the formation of the ATP8A2, ATP8B1 and ATP8B2 P-type ATPAse intermediate phosphoenzymes. Involved in uptake of platelet-activating factor (PAF). Can also mediate the export of alpha subunits ATP8A1, ATP8B1, ATP8B2, ATP8B4, ATP10A, ATP10B, ATP10D, ATP11A, ATP11B and ATP11C from ER to other membrane localizations. This is Cell cycle control protein 50A from Rattus norvegicus (Rat).